We begin with the raw amino-acid sequence, 480 residues long: Protein nucleotidyltransferase YdiU (480 aa).

ATP contacts are provided by G86, G88, R89, K109, D121, G122, R172, and R179. The active-site Proton acceptor is the D248. Mg(2+) is bound by residues N249 and D258. D258 is a binding site for ATP.

This sequence belongs to the SELO family. The cofactor is Mg(2+). Mn(2+) is required as a cofactor.

The enzyme catalyses L-seryl-[protein] + ATP = 3-O-(5'-adenylyl)-L-seryl-[protein] + diphosphate. The catalysed reaction is L-threonyl-[protein] + ATP = 3-O-(5'-adenylyl)-L-threonyl-[protein] + diphosphate. It carries out the reaction L-tyrosyl-[protein] + ATP = O-(5'-adenylyl)-L-tyrosyl-[protein] + diphosphate. It catalyses the reaction L-histidyl-[protein] + UTP = N(tele)-(5'-uridylyl)-L-histidyl-[protein] + diphosphate. The enzyme catalyses L-seryl-[protein] + UTP = O-(5'-uridylyl)-L-seryl-[protein] + diphosphate. The catalysed reaction is L-tyrosyl-[protein] + UTP = O-(5'-uridylyl)-L-tyrosyl-[protein] + diphosphate. Nucleotidyltransferase involved in the post-translational modification of proteins. It can catalyze the addition of adenosine monophosphate (AMP) or uridine monophosphate (UMP) to a protein, resulting in modifications known as AMPylation and UMPylation. In Salmonella arizonae (strain ATCC BAA-731 / CDC346-86 / RSK2980), this protein is Protein nucleotidyltransferase YdiU.